A 144-amino-acid polypeptide reads, in one-letter code: Maximins 2/H8 type 1 (144 aa).

The N-terminal stretch at 1–18 is a signal peptide; sequence MNFKYIVAVSFLIASAYA. Residues 19–43 constitute a propeptide that is removed on maturation; it reads RSEENEIQSLSQRDVLEEESLREMR. Residue N70 is modified to Asparagine amide. The propeptide occupies 74 to 123; sequence TAEEHEVMKRLETVMRDLDSLDYPEEASERETRGFNQEEIANLFTKKEKR. An Isoleucine amide modification is found at I143.

The protein belongs to the bombinin family. As to expression, expressed by the skin glands.

The protein resides in the secreted. Its function is as follows. Maximin-2 shows antibacterial activity against both Gram-positive and Gram-negative bacteria. It also shows antimicrobial activity against the fungus C.albicans, but not against A.flavus nor P.uticale. It has little hemolytic activity. In terms of biological role, maximin-H8 shows antimicrobial activity against bacteria and against the fungus C.albicans. Shows strong hemolytic activity. The chain is Maximins 2/H8 type 1 from Bombina maxima (Giant fire-bellied toad).